The sequence spans 118 residues: Large ribosomal subunit protein bL20 (118 aa).

The protein belongs to the bacterial ribosomal protein bL20 family.

In terms of biological role, binds directly to 23S ribosomal RNA and is necessary for the in vitro assembly process of the 50S ribosomal subunit. It is not involved in the protein synthesizing functions of that subunit. The sequence is that of Large ribosomal subunit protein bL20 from Serratia proteamaculans (strain 568).